Consider the following 163-residue polypeptide: Phosphopantetheine adenylyltransferase (163 aa).

Residue threonine 11 coordinates substrate. Residues 11–12 (TF) and histidine 19 each bind ATP. Positions 43, 75, and 89 each coordinate substrate. Residues 90 to 92 (GLR), glutamate 100, and 125 to 131 (YMFISAT) contribute to the ATP site.

The protein belongs to the bacterial CoaD family. Homohexamer. Requires Mg(2+) as cofactor.

Its subcellular location is the cytoplasm. The enzyme catalyses (R)-4'-phosphopantetheine + ATP + H(+) = 3'-dephospho-CoA + diphosphate. It participates in cofactor biosynthesis; coenzyme A biosynthesis; CoA from (R)-pantothenate: step 4/5. Reversibly transfers an adenylyl group from ATP to 4'-phosphopantetheine, yielding dephospho-CoA (dPCoA) and pyrophosphate. The chain is Phosphopantetheine adenylyltransferase from Azoarcus sp. (strain BH72).